The chain runs to 309 residues: Elongation factor Ts (309 aa).

Positions 82–85 (TDFV) are involved in Mg(2+) ion dislocation from EF-Tu.

This sequence belongs to the EF-Ts family.

It is found in the cytoplasm. Its function is as follows. Associates with the EF-Tu.GDP complex and induces the exchange of GDP to GTP. It remains bound to the aminoacyl-tRNA.EF-Tu.GTP complex up to the GTP hydrolysis stage on the ribosome. The sequence is that of Elongation factor Ts from Rickettsia bellii (strain OSU 85-389).